Here is a 289-residue protein sequence, read N- to C-terminus: 2-dehydro-3-deoxyphosphooctonate aldolase (289 aa).

Belongs to the KdsA family.

It is found in the cytoplasm. The catalysed reaction is D-arabinose 5-phosphate + phosphoenolpyruvate + H2O = 3-deoxy-alpha-D-manno-2-octulosonate-8-phosphate + phosphate. Its pathway is carbohydrate biosynthesis; 3-deoxy-D-manno-octulosonate biosynthesis; 3-deoxy-D-manno-octulosonate from D-ribulose 5-phosphate: step 2/3. It participates in bacterial outer membrane biogenesis; lipopolysaccharide biosynthesis. In Cupriavidus taiwanensis (strain DSM 17343 / BCRC 17206 / CCUG 44338 / CIP 107171 / LMG 19424 / R1) (Ralstonia taiwanensis (strain LMG 19424)), this protein is 2-dehydro-3-deoxyphosphooctonate aldolase.